The primary structure comprises 390 residues: Levoglucosan dehydrogenase (390 aa).

10 residues coordinate NADH: Phe13, Met14, Glu43, Thr81, Asn83, His86, Glu103, Lys104, Ala130, and Asn132. Lys104 provides a ligand contact to levoglucosan. Positions 133 and 163 each coordinate levoglucosan. Residues Trp175 and Arg176 each coordinate NADH. Levoglucosan is bound by residues Arg176, Asp189, and His193. Tyr335 contacts NADH.

Belongs to the Gfo/Idh/MocA family. As to quaternary structure, homotetramer.

The catalysed reaction is levoglucosan + NAD(+) = 3-dehydrolevoglucosan + NADH + H(+). Catalyzes the oxidation of levoglucosan (1,6-anhydro-beta-D-glucose, LG) to 3-dehydrolevoglucosan (3-keto-LG). Exhibits high substrate specificity toward levoglucosan and NAD(+) for the oxidative reaction. Exhibits weak activities (about 4% compared with that of LG) toward L-sorbose and 1,5-anhydro-D-glucitol, and activity toward D-xylose is also detectable (1.7%). Can also efficiently catalyzes the NADH-dependent reduction (reverse reaction) of 3-keto-LG. The chain is Levoglucosan dehydrogenase from Pseudarthrobacter phenanthrenivorans (strain DSM 18606 / JCM 16027 / LMG 23796 / Sphe3) (Arthrobacter phenanthrenivorans).